We begin with the raw amino-acid sequence, 126 residues long: Small ribosomal subunit protein eS8 (126 aa).

Over residues 1 to 10 (MAIWQGSSLR) the composition is skewed to polar residues. Residues 1-35 (MAIWQGSSLRKPSGARSRRNKNKRNAEFGRNPAET) are disordered.

The protein belongs to the eukaryotic ribosomal protein eS8 family. Part of the 30S ribosomal subunit.

This chain is Small ribosomal subunit protein eS8, found in Methanosphaera stadtmanae (strain ATCC 43021 / DSM 3091 / JCM 11832 / MCB-3).